We begin with the raw amino-acid sequence, 206 residues long: GTP cyclohydrolase 1 (206 aa).

The Zn(2+) site is built by Cys-97, His-100, and Cys-168.

This sequence belongs to the GTP cyclohydrolase I family. Toroid-shaped homodecamer, composed of two pentamers of five dimers.

It carries out the reaction GTP + H2O = 7,8-dihydroneopterin 3'-triphosphate + formate + H(+). The protein operates within cofactor biosynthesis; 7,8-dihydroneopterin triphosphate biosynthesis; 7,8-dihydroneopterin triphosphate from GTP: step 1/1. In Chromobacterium violaceum (strain ATCC 12472 / DSM 30191 / JCM 1249 / CCUG 213 / NBRC 12614 / NCIMB 9131 / NCTC 9757 / MK), this protein is GTP cyclohydrolase 1.